Here is a 380-residue protein sequence, read N- to C-terminus: Cytochrome b (380 aa).

Helical transmembrane passes span 34-54 (FGSL…LLAM), 78-99 (WLIR…YFHI), 114-134 (WNTG…GYVL), and 179-199 (FFAL…IHLT). Heme b-binding residues include His-84 and His-98. Residues His-183 and His-197 each coordinate heme b. His-202 is a binding site for a ubiquinone. 4 consecutive transmembrane segments (helical) span residues 227–247 (LKDI…ALFS), 289–309 (LGGV…PFLH), 321–341 (ISQL…WVGS), and 348–368 (FIII…VLFP).

This sequence belongs to the cytochrome b family. As to quaternary structure, the cytochrome bc1 complex contains 11 subunits: 3 respiratory subunits (MT-CYB, CYC1 and UQCRFS1), 2 core proteins (UQCRC1 and UQCRC2) and 6 low-molecular weight proteins (UQCRH/QCR6, UQCRB/QCR7, UQCRQ/QCR8, UQCR10/QCR9, UQCR11/QCR10 and a cleavage product of UQCRFS1). This cytochrome bc1 complex then forms a dimer. Heme b is required as a cofactor.

Its subcellular location is the mitochondrion inner membrane. Its function is as follows. Component of the ubiquinol-cytochrome c reductase complex (complex III or cytochrome b-c1 complex) that is part of the mitochondrial respiratory chain. The b-c1 complex mediates electron transfer from ubiquinol to cytochrome c. Contributes to the generation of a proton gradient across the mitochondrial membrane that is then used for ATP synthesis. This is Cytochrome b (MT-CYB) from Pachyptila turtur (Fairy prion).